The following is a 492-amino-acid chain: MNRGGSSASASANYLLCTNCRKVLRKDKRIRVSQPLTRGPSAFIPEKEVVQANTADERTNFLVEEYSTSGRLDNITQVMSLHTQYLESFLRSQFYMLRMDGPLPLPDRHYIAIMAAARHQCSYLINMHVDEFLKTGGIAEWLNGLEYVPQRLRNLNEINKLLAHRPWLITKEHIQKLVKTGENNWSLPELVHAVVLLAHYHALASFVFGSGINPERDPGIANGFRLISVSSFCVCDLANDNSIENTSLAGSNFGIVDSLGELEALMERMKRLQEDREDDETTREEMTTRFEKEKKESLFVVPGETLHAFPHSDFEDDVIVTADVSRYIEDPSFGYEDFARRGEEHLPTFRAQDYTWENHGFSLVNRLYSDIGHLLDEKFRMVYNLTYNTMATHEDVDTTTLRRALFNYVHCMFGIRYDDYDYGEVNQLLERSLKVYIKTVTCYPERTTKRMYDSYWRQFTHSEKVHVNLLLMEARMQAELLYALRAITRHLT.

Residues 62 to 243 are N-terminal domain; may mediate the alkylhydroperoxide reductase activity; the sequence is LVEEYSTSGR…VCDLANDNSI (182 aa). The active-site Cysteine sulfenic acid (-SOH) intermediate is the cysteine 121. Residues 310 to 492 are C-terminal domain; mediates TORC1 regulation; the sequence is PHSDFEDDVI…ALRAITRHLT (183 aa). L-leucine contacts are provided by residues 386 to 389, threonine 398, and glutamate 463; that span reads TYNT.

Belongs to the sestrin family. In terms of assembly, interacts with the GATOR2 complex which is composed of MIOS, SEC13, SEH1L, WDR24 and WDR59; the interaction is not regulated by leucine. Interacts with RRAGA, RRAGB, RRAGC and RRAGD; may function as a guanine nucleotide dissociation inhibitor for RRAGs and regulate them. Interacts with the TORC2 complex; through RICTOR. Detected in liver and skeletal muscles.

It is found in the cytoplasm. The enzyme catalyses a hydroperoxide + L-cysteinyl-[protein] = S-hydroxy-L-cysteinyl-[protein] + an alcohol. In terms of biological role, may function as an intracellular leucine sensor that negatively regulates the TORC1 signaling pathway. May also regulate the insulin-receptor signaling pathway through activation of TORC2. This metabolic regulator may also play a role in protection against oxidative and genotoxic stresses. May prevent the accumulation of reactive oxygen species (ROS) through the alkylhydroperoxide reductase activity born by the N-terminal domain of the protein. This Mus musculus (Mouse) protein is Sestrin-3.